A 197-amino-acid chain; its full sequence is Imidazoleglycerol-phosphate dehydratase (197 aa).

Belongs to the imidazoleglycerol-phosphate dehydratase family.

Its subcellular location is the cytoplasm. The catalysed reaction is D-erythro-1-(imidazol-4-yl)glycerol 3-phosphate = 3-(imidazol-4-yl)-2-oxopropyl phosphate + H2O. It functions in the pathway amino-acid biosynthesis; L-histidine biosynthesis; L-histidine from 5-phospho-alpha-D-ribose 1-diphosphate: step 6/9. The polypeptide is Imidazoleglycerol-phosphate dehydratase (Nitrobacter hamburgensis (strain DSM 10229 / NCIMB 13809 / X14)).